The primary structure comprises 386 residues: Glucose-1-phosphate adenylyltransferase (386 aa).

Residues Tyr-100, Gly-165, 180–181, and Ser-191 each bind alpha-D-glucose 1-phosphate; that span reads EK.

It belongs to the bacterial/plant glucose-1-phosphate adenylyltransferase family. Homotetramer.

The catalysed reaction is alpha-D-glucose 1-phosphate + ATP + H(+) = ADP-alpha-D-glucose + diphosphate. The protein operates within glycan biosynthesis; glycogen biosynthesis. Involved in the biosynthesis of ADP-glucose, a building block required for the elongation reactions to produce glycogen. Catalyzes the reaction between ATP and alpha-D-glucose 1-phosphate (G1P) to produce pyrophosphate and ADP-Glc. This Clostridium botulinum (strain Eklund 17B / Type B) protein is Glucose-1-phosphate adenylyltransferase.